Consider the following 338-residue polypeptide: MKRMIALDGAQGEGGGQILRSALSLSMITGQPFTITGIRAGRAKPGLLRQHLTAVKAATEICRATVEGAELGSQRLVFRPGTVRGGDYRFAIGSAGSSTLVLQTVLPALWFADGPSRVEVSGGTDNPSAPPADFIRRVLEPLLAKMGIHQQTTLLRHGFYPAGGGVVATEVSPVASFNTLQLGERGNIVQMRGEVLLAGVPRHVAEREIATLVGSFSLHEQNIHNLPRDQGSGNTVSLEVESENITERFFIVGEKRVSAEVVAAQLVKEVKRYLASPAAVGEYLADQLVLPMALAGAGEFTVAHPSCHLLTNIAVVERFLSVRFSLVEADGVTRVSIE.

ATP-binding positions include Q103 and 283 to 287 (YLADQ). H308 acts as the Tele-AMP-histidine intermediate in catalysis.

It belongs to the RNA 3'-terminal cyclase family. Type 1 subfamily.

The protein localises to the cytoplasm. It carries out the reaction a 3'-end 3'-phospho-ribonucleotide-RNA + ATP = a 3'-end 2',3'-cyclophospho-ribonucleotide-RNA + AMP + diphosphate. Its function is as follows. Catalyzes the conversion of 3'-phosphate to a 2',3'-cyclic phosphodiester at the end of RNA. The mechanism of action of the enzyme occurs in 3 steps: (A) adenylation of the enzyme by ATP; (B) transfer of adenylate to an RNA-N3'P to produce RNA-N3'PP5'A; (C) and attack of the adjacent 2'-hydroxyl on the 3'-phosphorus in the diester linkage to produce the cyclic end product. The biological role of this enzyme is unknown but it is likely to function in some aspects of cellular RNA processing. This Escherichia coli O127:H6 (strain E2348/69 / EPEC) protein is RNA 3'-terminal phosphate cyclase.